We begin with the raw amino-acid sequence, 566 residues long: MVIVTDSNFLDAAGTLRKGLLYCDFVAIDFEFLGLDVSAISLHDTVESRYQILRDNVIKYRPCQLGLTLFKQKSNRAYKADTYSVPLFQRFGDNDTSISLPSMRFLVKNKFNLNQVFMDGVEFCTRKEFKKFERALLAGTAASYLSREVKSQIELLKVMVHEKCYQSTSYHITHRTDEPMQKIPLKMKPNSSVSLRMPRNLSSVEKYMIIYELTKAFPQFLFTCDEKQQNLHVKNISDDYLKEKDNLERARARCSESVKGVSAILQVVHMTGKLVVGHNSLLDAMYMYHYFFSHLPANYQMFKDKFNALFPRIMDTKLLAQALRFELPGVGDSLENLGDYFGSDKSDKTVPPELRGFIEPWMNPLEDESENVYHNAGFDSYVTGEVFLKLAHIYINRRNNFKNEILDFDRIYQYLEAPILNRLPFQLMDVGCCYLTGDDSKGFRPDVITIVRRDRVAIEEDEFRYLEKALGTLMATYQFDIEWSKNKKELFLATNSPGSYAFLCEKFSNDSSLAPLDELDSGKKWTFEQRQTAWRSFKNRGVGIGINAKRIRAQNQATKIQRAMEI.

4 residues coordinate a divalent metal cation: aspartate 29, glutamate 31, aspartate 283, and aspartate 379.

This sequence belongs to the CAF1 family. The cofactor is a divalent metal cation. Expressed in germline cells.

It is found in the cytoplasm. In terms of biological role, involved in transcriptome surveillance. Required for piwi-interacting RNAs (piRNAs) 3'-end trimming, which is important for both fertility and piRNA-directed gene silencing. Has 3' to 5' exonuclease activity in vitro. The sequence is that of 3'-5' exoribonuclease parn-1 from Caenorhabditis elegans.